The primary structure comprises 769 residues: Neutral alpha-glucosidase C (769 aa).

D366 functions as the Nucleophile in the catalytic mechanism. Residue E369 is part of the active site. The Proton donor role is filled by D442.

Belongs to the glycosyl hydrolase 31 family.

It catalyses the reaction Hydrolysis of terminal, non-reducing (1-&gt;4)-linked alpha-D-glucose residues with release of alpha-D-glucose.. Functionally, has alpha-glucosidase activity. The polypeptide is Neutral alpha-glucosidase C (GANC) (Macaca fascicularis (Crab-eating macaque)).